The sequence spans 212 residues: uncharacterized protein (212 aa).

2 disordered regions span residues 1–25 (MARK…GRPN) and 165–212 (STSG…HWGG). The span at 202-212 (RSSSARGHWGG) shows a compositional bias: low complexity.

This is an uncharacterized protein from Escherichia coli (strain K12).